The primary structure comprises 757 residues: 5-methyltetrahydropteroyltriglutamate--homocysteine methyltransferase (757 aa).

Residues 17-20 and K117 each bind 5-methyltetrahydropteroyltri-L-glutamate; that span reads RELK. Residues 432-434 and E485 contribute to the L-homocysteine site; that span reads IGS. L-methionine is bound by residues 432 to 434 and E485; that span reads IGS. Residues 516-517 and W562 each bind 5-methyltetrahydropteroyltri-L-glutamate; that span reads RC. An L-homocysteine-binding site is contributed by D600. D600 lines the L-methionine pocket. Position 606 (E606) interacts with 5-methyltetrahydropteroyltri-L-glutamate. Residues H642, C644, and E666 each contribute to the Zn(2+) site. Catalysis depends on H695, which acts as the Proton donor. C727 lines the Zn(2+) pocket.

This sequence belongs to the vitamin-B12 independent methionine synthase family. The cofactor is Zn(2+).

It carries out the reaction 5-methyltetrahydropteroyltri-L-glutamate + L-homocysteine = tetrahydropteroyltri-L-glutamate + L-methionine. It functions in the pathway amino-acid biosynthesis; L-methionine biosynthesis via de novo pathway; L-methionine from L-homocysteine (MetE route): step 1/1. Catalyzes the transfer of a methyl group from 5-methyltetrahydrofolate to homocysteine resulting in methionine formation. This Erwinia tasmaniensis (strain DSM 17950 / CFBP 7177 / CIP 109463 / NCPPB 4357 / Et1/99) protein is 5-methyltetrahydropteroyltriglutamate--homocysteine methyltransferase.